Here is a 495-residue protein sequence, read N- to C-terminus: MSAVPGPVYGLEVPPGEILIPAAMEFPASSLSVAGASFATPLVLPAGDLNSNQKILQFRITMAAVDPTEEPEADGEGNIPTVPRSTLRLVKRALPGLEDEDDEIDDEYMKALLAGSDDEEDSDEEANGGPSDPAKAKKQRQAAAIKKLLESAQEESDEEMEDAKPNGKAKGKAKATEESDDDEDEDSDDDSEEGADLENFVICTLDTERNYQQPLDITVNHGEKVFFVVTGSHTIYLTGNYIMDDDEDDEDSEDEDEYDLSPDELEYGLEGDDSDASDDLDGLEDPRVEEIDTDEEEAPKLVAANKGKNKRAAEEAAGLDELITKEDAKLSKKQQKKLKNNKGEAVAAEEKKDAKKVQFAKNLEQGPTGSTTEKPKQAKDSKPATGVKVVQGVTVDDRTVGNGRTVKSGDTVGVRYIGKLQNGKQFDANKKGKPFSFKAGKGQVIKGWDIGVIGMAIGGERRLTIPAHLAYGSRGLPGIPANSTLIFDVKLLEIK.

Disordered regions lie at residues Gly115–Glu198, Met243–Ala312, and Lys333–Thr385. Acidic residues-rich tracts occupy residues Ser116–Ala126, Ala152–Glu161, Glu178–Asp196, and Met243–Leu283. A compositionally biased stretch (basic and acidic residues) spans Glu373–Lys382. Residues Gly409–Lys495 form the PPIase FKBP-type domain.

It belongs to the FKBP-type PPIase family. FKBP3/4 subfamily. As to quaternary structure, binds to histones H3 and H4.

It localises to the nucleus. The enzyme catalyses [protein]-peptidylproline (omega=180) = [protein]-peptidylproline (omega=0). With respect to regulation, inhibited by both FK506 and rapamycin. Its function is as follows. PPIase that acts as a histone chaperone. Histone proline isomerase that increases the rate of cis-trans isomerization at prolines on the histone H3 N-terminal tail. Proline isomerization influences H3 methylation thereby regulating gene expression. The sequence is that of FK506-binding protein 4 (FPR4) from Gibberella zeae (strain ATCC MYA-4620 / CBS 123657 / FGSC 9075 / NRRL 31084 / PH-1) (Wheat head blight fungus).